Reading from the N-terminus, the 152-residue chain is Superoxide dismutase [Cu-Zn] 4A (152 aa).

Residues His45, His47, and His62 each contribute to the Cu cation site. Cys56 and Cys145 are disulfide-bonded. Positions 62, 70, 79, and 82 each coordinate Zn(2+). His119 serves as a coordination point for Cu cation.

Belongs to the Cu-Zn superoxide dismutase family. As to quaternary structure, homodimer. The cofactor is Cu cation. Zn(2+) is required as a cofactor.

The protein resides in the cytoplasm. The enzyme catalyses 2 superoxide + 2 H(+) = H2O2 + O2. Its function is as follows. Destroys radicals which are normally produced within the cells and which are toxic to biological systems. This is Superoxide dismutase [Cu-Zn] 4A (SODCC.3) from Zea mays (Maize).